Consider the following 286-residue polypeptide: Interferon-induced 35 kDa protein (286 aa).

The leucine-zipper stretch occupies residues 5-26; that stretch reads LDAALHALQEEQARLKMRLWDL. 2 consecutive NID domains span residues 81 to 170 and 183 to 266; these read ALIT…GDVD and FARD…GEVE.

This sequence belongs to the NMI family. As to quaternary structure, homodimer. Also interacts with BATF. Interacts with TRIM21. Interacts with NMI; the interaction is direct and is facilitated by TRIM21. In terms of processing, phosphorylated. Dephosphorylation correlates with the formation of a complex with NMI. In terms of tissue distribution, expressed in a wide range of cell types, including fibroblasts, macrophages, and epithelial cells.

It localises to the cytoplasm. The protein localises to the nucleus. Its subcellular location is the secreted. Functionally, acts as a signaling pathway regulator involved in innate immune system response. In response to interferon IFN-alpha, associates in a complex with signaling pathway regulator NMI to regulate immune response; the complex formation prevents proteasome-mediated degradation of IFI35 and correlates with IFI35 dephosphorylation. In complex with NMI, inhibits virus-triggered type I interferon/IFN-beta production. In complex with NMI, negatively regulates nuclear factor NF-kappa-B signaling by inhibiting the nuclear translocation, activation and transcription of the NF-kappa-B subunit p65/RELA, resulting in the inhibition of endothelial cell proliferation, migration and re-endothelialization of injured arteries. Beside its role as an intracellular signaling pathway regulator, also functions extracellularly as damage-associated molecular patterns (DAMPs) to promote inflammation when actively released by macrophage to the extracellular space during cell injury and pathogen invasion. Macrophage-secreted IFI35 activates NF-kappa-B signaling in adjacent macrophages through Toll-like receptor 4/TLR4 activation, thereby inducing NF-kappa-B translocation from the cytoplasm into the nucleus which promotes the release of pro-inflammatory cytokines. The chain is Interferon-induced 35 kDa protein from Homo sapiens (Human).